Here is a 963-residue protein sequence, read N- to C-terminus: Integrator complex subunit 4 (963 aa).

An N6-acetyllysine modification is found at K26. HEAT repeat units lie at residues 66-105, 145-183, 190-228, 229-263, 277-313, 369-405, 406-444, and 446-484; these read AESVEGVVRILLEHYYKENDPSVRLKIASLLGLLSKTAGF, QAIQMRLVDVACKHLTDTSHGVRNKCLQLLGNLGSLEKS, GLAARDVQKIIGDYFSDQDPRVRTAAIKAMLQLHERGLK, LHQTIYNQACKLLSDDYEQVRSAAVQLIWVVSQLY, IRLVDDAFGKICHMVSDGSWVVRVQAAKLLGSMEQVS, NLIESGACGAFVHGLEDEMYEVRIAAVEALCMLAQSS, PSFAEKCLDFLVDMFNDEIEEVRLQSIHTMRKISNNITL, and EDQLDTVLAVLEDSSRDIREALHELLCCTNVSTKEGIHL. K791 is covalently cross-linked (Glycyl lysine isopeptide (Lys-Gly) (interchain with G-Cter in SUMO1); alternate). A Glycyl lysine isopeptide (Lys-Gly) (interchain with G-Cter in SUMO2); alternate cross-link involves residue K791.

It belongs to the Integrator subunit 4 family. As to quaternary structure, component of the Integrator complex, composed of core subunits INTS1, INTS2, INTS3, INTS4, INTS5, INTS6, INTS7, INTS8, INTS9/RC74, INTS10, INTS11/CPSF3L, INTS12, INTS13, INTS14 and INTS15. The core complex associates with protein phosphatase 2A subunits PPP2CA and PPP2R1A, to form the Integrator-PP2A (INTAC) complex. INTS4 is part of the RNA endonuclease subcomplex, composed of INTS4, INTS9, INTS11 and inositol hexakisphosphate (InsP6). Interacts with BRAT1; interaction is required for the assembly of the RNA endonuclease subcomplex.

The protein resides in the nucleus. It localises to the cytoplasm. Its function is as follows. Component of the integrator complex, a multiprotein complex that terminates RNA polymerase II (Pol II) transcription in the promoter-proximal region of genes. The integrator complex provides a quality checkpoint during transcription elongation by driving premature transcription termination of transcripts that are unfavorably configured for transcriptional elongation: the complex terminates transcription by (1) catalyzing dephosphorylation of the C-terminal domain (CTD) of Pol II subunit POLR2A/RPB1 and SUPT5H/SPT5, (2) degrading the exiting nascent RNA transcript via endonuclease activity and (3) promoting the release of Pol II from bound DNA. The integrator complex is also involved in terminating the synthesis of non-coding Pol II transcripts, such as enhancer RNAs (eRNAs), small nuclear RNAs (snRNAs), telomerase RNAs and long non-coding RNAs (lncRNAs). Within the integrator complex, INTS4 acts as an scaffold that links INTS9 and INTS11. Mediates recruitment of cytoplasmic dynein to the nuclear envelope, probably as component of the integrator complex. In Homo sapiens (Human), this protein is Integrator complex subunit 4.